A 274-amino-acid chain; its full sequence is Oxidoreductase stcQ (274 aa).

The protein belongs to the avfA family.

The protein operates within mycotoxin biosynthesis; sterigmatocystin biosynthesis. Oxidoreductase; part of the gene cluster that mediates the biosynthesis of sterigmatocystin (ST), a polyketide-derived furanocoumarin which is part of the most toxic and carcinogenic compounds among the known mycotoxins. The first step in the biosynthesis of sterigmatocystin is the production of hexanoate by the fatty acid synthase (FAS) units stcJ and stcK. The polyketide backbone is assembled by the non-reducing polyketide synthase stcA by condensation of the starter hexanoyl-CoA and 7 malonyl-CoA extender units followed by cyclization and release of norsolorinic acid. Norsolorinic acid is the first stable intermediate in the biosynthesis of sterigmatocystin and is converted into averantin (AVN) by the ketoreductase stcE which reduces the hexanoate ketone to an alcohol. Averantin is then oxidized into 5'-hydroxyaverantin (HAVN) by the cytochrome P450 monooxygenase stcF. 5'-hydroxyaverantin is further converted to 5'-oxyaverantin (OAVN) by the 5'-hydroxyaverantin dehydrogenase stcG. The next step is the conversion of OAVN into averufin (AVF) which is catalyzed by a yet to be identified enzyme. The cytochrome P450 monooxygenase stcB and the flavin-binding monooxygenase stcW are both required for the conversion of averufin to 1-hydroxyversicolorone. The esterase stcI probably catalyzes the formation of versiconal hemiacetal acetate from 1-hydroxyversicolorone. The oxydoreductase stcN then probably catalyzes the biosynthetic step from versiconal to versicolorin B (VERB). The next step is performed by the versicolorin B desaturase stcL to produce versicolorin A (VERA). The ketoreductase stcU and the cytochrome P450 monooxygenase stcS are involved in the conversion of versicolorin A to demethylsterigmatocystin. The Baeyer-Villiger oxidas stcQ and the reductase stcR might be involved in the biosynthetic step from versicolorin A to demethylsterigmatocystin. The final step in the biosynthesis of sterigmatocystin is the methylation of demethylsterigmatocystin catalyzed by the methyltransferase stcP. The sequence is that of Oxidoreductase stcQ from Emericella nidulans (strain FGSC A4 / ATCC 38163 / CBS 112.46 / NRRL 194 / M139) (Aspergillus nidulans).